The primary structure comprises 348 residues: Photosystem II protein D1 (348 aa).

A run of 3 helical transmembrane segments spans residues 33–50 (YIGW…LATV), 122–137 (HFIL…EWEF), and 146–160 (WIFV…AASA). H122 lines the chlorophyll a pocket. Residue Y130 participates in pheophytin a binding. [CaMn4O5] cluster contacts are provided by D174 and E193. The chain crosses the membrane as a helical span at residues 201-222 (FHILGVAAVFGGSLFSAMHGSL). H202 contacts chlorophyll a. A quinone contacts are provided by residues H219 and 268–269 (SF). H219 is a binding site for Fe cation. H276 contacts Fe cation. Residues 278–292 (FLAAWPVIGIWFTAL) traverse the membrane as a helical segment. The [CaMn4O5] cluster site is built by H336, E337, D346, and A348.

Belongs to the reaction center PufL/M/PsbA/D family. As to quaternary structure, PSII is composed of 1 copy each of membrane proteins PsbA, PsbB, PsbC, PsbD, PsbE, PsbF, PsbH, PsbI, PsbJ, PsbK, PsbL, PsbM, PsbT, PsbX, PsbY, PsbZ, Psb30/Ycf12, at least 3 peripheral proteins of the oxygen-evolving complex and a large number of cofactors. It forms dimeric complexes. The D1/D2 heterodimer binds P680, chlorophylls that are the primary electron donor of PSII, and subsequent electron acceptors. It shares a non-heme iron and each subunit binds pheophytin, quinone, additional chlorophylls, carotenoids and lipids. D1 provides most of the ligands for the Mn4-Ca-O5 cluster of the oxygen-evolving complex (OEC). There is also a Cl(-1) ion associated with D1 and D2, which is required for oxygen evolution. The PSII complex binds additional chlorophylls, carotenoids and specific lipids. is required as a cofactor. In terms of processing, tyr-165 forms a radical intermediate that is referred to as redox-active TyrZ, YZ or Y-Z.

It is found in the plastid. Its subcellular location is the chloroplast thylakoid membrane. The enzyme catalyses 2 a plastoquinone + 4 hnu + 2 H2O = 2 a plastoquinol + O2. Its function is as follows. Photosystem II (PSII) is a light-driven water:plastoquinone oxidoreductase that uses light energy to abstract electrons from H(2)O, generating O(2) and a proton gradient subsequently used for ATP formation. It consists of a core antenna complex that captures photons, and an electron transfer chain that converts photonic excitation into a charge separation. The D1/D2 (PsbA/PsbD) reaction center heterodimer binds P680, the primary electron donor of PSII as well as several subsequent electron acceptors. This chain is Photosystem II protein D1, found in Heterocapsa pygmaea (Dinoflagellate).